The following is a 198-amino-acid chain: Proteasome subunit beta type-2 (198 aa).

It belongs to the peptidase T1B family. As to quaternary structure, the 26S proteasome consists of a 20S proteasome core and two 19S regulatory subunits. The 20S proteasome core is composed of 28 subunits that are arranged in four stacked rings, resulting in a barrel-shaped structure. The two end rings are each formed by seven alpha subunits, and the two central rings are each formed by seven beta subunits. The catalytic chamber with the active sites is on the inside of the barrel.

It is found in the cytoplasm. Its subcellular location is the nucleus. Its function is as follows. Non-catalytic component of the proteasome, a multicatalytic proteinase complex which is characterized by its ability to cleave peptides with Arg, Phe, Tyr, Leu, and Glu adjacent to the leaving group at neutral or slightly basic pH. The proteasome has an ATP-dependent proteolytic activity. The chain is Proteasome subunit beta type-2 (psmB2) from Dictyostelium discoideum (Social amoeba).